A 432-amino-acid polypeptide reads, in one-letter code: Glutamate-1-semialdehyde 2,1-aminomutase (432 aa).

Lys265 carries the post-translational modification N6-(pyridoxal phosphate)lysine.

Belongs to the class-III pyridoxal-phosphate-dependent aminotransferase family. HemL subfamily. Homodimer. Requires pyridoxal 5'-phosphate as cofactor.

Its subcellular location is the cytoplasm. The enzyme catalyses (S)-4-amino-5-oxopentanoate = 5-aminolevulinate. It participates in porphyrin-containing compound metabolism; protoporphyrin-IX biosynthesis; 5-aminolevulinate from L-glutamyl-tRNA(Glu): step 2/2. This chain is Glutamate-1-semialdehyde 2,1-aminomutase, found in Histophilus somni (strain 2336) (Haemophilus somnus).